A 127-amino-acid chain; its full sequence is Succinate dehydrogenase cytochrome b560 subunit (127 aa).

Helical transmembrane passes span 36–53 (VGLA…RIIL) and 60–83 (NLLT…FILL). Histidine 88 lines the heme pocket. A helical transmembrane segment spans residues 109 to 126 (LSKFSLFLLVSLSLILIF).

This sequence belongs to the cytochrome b560 family. Forms part of complex II containing four subunits: a 70 kDa flavoprotein (FP), a 27 kDa iron-sulfur protein (IP), a cytochrome B and a membrane-anchoring protein. Heme serves as cofactor.

The protein resides in the mitochondrion inner membrane. The protein operates within carbohydrate metabolism; tricarboxylic acid cycle. Functionally, membrane-anchoring subunit of succinate dehydrogenase (SDH) that is involved in complex II of the mitochondrial electron transport chain and is responsible for transferring electrons from succinate to ubiquinone (coenzyme Q). This is Succinate dehydrogenase cytochrome b560 subunit (SDH3) from Chondrus crispus (Carrageen Irish moss).